A 293-amino-acid polypeptide reads, in one-letter code: Protein translocase subunit SecF (293 aa).

6 helical membrane passes run 10–30 (ARIFFSITAVVLIVGIVSMFA), 130–150 (VKSAVGAVVLSWVLMIIYITI), 158–178 (LAAIVALIIDVMVTLTWFSVL), 185–205 (SFVAALLTVVGYSVNGTIVVF), 244–264 (LFAVVAIFLFGGETIHNFSFA), and 267–287 (VGFCSGFYTSTFLAGSMWLFF).

Belongs to the SecD/SecF family. SecF subfamily. As to quaternary structure, forms a complex with SecD. Part of the essential Sec protein translocation apparatus which comprises SecA, SecYEG and auxiliary proteins SecDF. Other proteins may also be involved.

Its subcellular location is the cell membrane. Functionally, part of the Sec protein translocase complex. Interacts with the SecYEG preprotein conducting channel. SecDF uses the proton motive force (PMF) to complete protein translocation after the ATP-dependent function of SecA. The polypeptide is Protein translocase subunit SecF (Acidaminococcus fermentans (strain ATCC 25085 / DSM 20731 / CCUG 9996 / CIP 106432 / VR4)).